We begin with the raw amino-acid sequence, 249 residues long: Pleckstrin homology domain-containing family F member 2 (249 aa).

Residues 35–131 (VLIGEGVLTK…WMNHINKCVS (97 aa)) enclose the PH domain. The FYVE-type zinc finger occupies 152 to 212 (DSEATVCMRC…ICDSCYDLLS (61 aa)). Residues C158, C161, C175, C178, C183, C186, C204, and C207 each contribute to the Zn(2+) site. Residues 219–232 (CQSTRSDSYSQSPK) show a composition bias toward polar residues. The disordered stretch occupies residues 219-249 (CQSTRSDSYSQSPKSSLNDASDDDDDEDSSD). Positions 238–249 (ASDDDDDEDSSD) are enriched in acidic residues.

Its subcellular location is the early endosome membrane. The protein resides in the endoplasmic reticulum. In terms of biological role, may play a role in early endosome fusion upstream of RAB5, hence regulating receptor trafficking and fluid-phase transport. Enhances cellular sensitivity to TNF-induced apoptosis. In Gallus gallus (Chicken), this protein is Pleckstrin homology domain-containing family F member 2 (PLEKHF2).